Here is a 498-residue protein sequence, read N- to C-terminus: Galactose-1-phosphate uridylyltransferase (498 aa).

It belongs to the galactose-1-phosphate uridylyltransferase type 2 family.

The protein localises to the cytoplasm. It carries out the reaction alpha-D-galactose 1-phosphate + UDP-alpha-D-glucose = alpha-D-glucose 1-phosphate + UDP-alpha-D-galactose. It functions in the pathway carbohydrate metabolism; galactose metabolism. The polypeptide is Galactose-1-phosphate uridylyltransferase (Latilactobacillus sakei subsp. sakei (strain 23K) (Lactobacillus sakei subsp. sakei)).